The sequence spans 309 residues: Golgi-associated RAB2 interactor protein 1A (309 aa).

Residues S231, S263, and S267 each carry the phosphoserine modification.

It belongs to the GARIN family. Interacts (via N-terminus) with RAB2B (in GTP-bound form).

Its subcellular location is the golgi apparatus. Functionally, RAB2B effector protein required for accurate acrosome formation and normal male fertility. The chain is Golgi-associated RAB2 interactor protein 1A from Homo sapiens (Human).